Reading from the N-terminus, the 143-residue chain is MQLNDLRSAPGARREKHRPGRGIGSGLGKTGGRGHKGQTSRSGGSIAPGFEGGQQPLHRRLPKFGFVSLKAMDRAEVRTSELNKLEGVVTLQALKDANLVGQHVQRVKVMLSGEVTRAVTLKGIAATKGARAAIEAAGGKFED.

The interval 1–58 (MQLNDLRSAPGARREKHRPGRGIGSGLGKTGGRGHKGQTSRSGGSIAPGFEGGQQPLH) is disordered. The segment covering 21 to 31 (RGIGSGLGKTG) has biased composition (gly residues).

Belongs to the universal ribosomal protein uL15 family. Part of the 50S ribosomal subunit.

Functionally, binds to the 23S rRNA. The protein is Large ribosomal subunit protein uL15 of Ectopseudomonas mendocina (strain ymp) (Pseudomonas mendocina).